Reading from the N-terminus, the 1069-residue chain is Carbamoyl phosphate synthase large chain (1069 aa).

The interval 1–401 (MPLNKDIKRV…AFLKGIRSLE (401 aa)) is carboxyphosphate synthetic domain. Residues arginine 129, arginine 169, glycine 175, glycine 176, lysine 208, valine 210, glutamate 215, glycine 241, isoleucine 242, histidine 243, glutamine 284, and glutamate 298 each coordinate ATP. Residues 133-327 (RDMMNRIGEP…IAKLAAKIAL (195 aa)) form the ATP-grasp 1 domain. Mg(2+) is bound by residues glutamine 284, glutamate 298, and asparagine 300. Residues glutamine 284, glutamate 298, and asparagine 300 each coordinate Mn(2+). The tract at residues 402 to 549 (IGKYSLDHKK…YSTYEQYDEV (148 aa)) is oligomerization domain. Residues 550–932 (EVSNRRKVIV…ALYKGFVGAN (383 aa)) form a carbamoyl phosphate synthetic domain region. An ATP-grasp 2 domain is found at 674–864 (DELLERLDIS…IVDIATQVML (191 aa)). Arginine 710, lysine 749, leucine 751, glutamate 755, glycine 780, valine 781, histidine 782, serine 783, glutamine 823, and glutamate 835 together coordinate ATP. Mg(2+) contacts are provided by glutamine 823, glutamate 835, and asparagine 837. Mn(2+) contacts are provided by glutamine 823, glutamate 835, and asparagine 837. The MGS-like domain maps to 932–1069 (NMYPSKEKGK…KDLEVFDITK (138 aa)). The segment at 933–1069 (MYPSKEKGKI…KDLEVFDITK (137 aa)) is allosteric domain.

Belongs to the CarB family. As to quaternary structure, composed of two chains; the small (or glutamine) chain promotes the hydrolysis of glutamine to ammonia, which is used by the large (or ammonia) chain to synthesize carbamoyl phosphate. Tetramer of heterodimers (alpha,beta)4. Requires Mg(2+) as cofactor. The cofactor is Mn(2+).

The enzyme catalyses hydrogencarbonate + L-glutamine + 2 ATP + H2O = carbamoyl phosphate + L-glutamate + 2 ADP + phosphate + 2 H(+). The catalysed reaction is hydrogencarbonate + NH4(+) + 2 ATP = carbamoyl phosphate + 2 ADP + phosphate + 2 H(+). It functions in the pathway amino-acid biosynthesis; L-arginine biosynthesis; carbamoyl phosphate from bicarbonate: step 1/1. The protein operates within pyrimidine metabolism; UMP biosynthesis via de novo pathway; (S)-dihydroorotate from bicarbonate: step 1/3. In terms of biological role, large subunit of the glutamine-dependent carbamoyl phosphate synthetase (CPSase). CPSase catalyzes the formation of carbamoyl phosphate from the ammonia moiety of glutamine, carbonate, and phosphate donated by ATP, constituting the first step of 2 biosynthetic pathways, one leading to arginine and/or urea and the other to pyrimidine nucleotides. The large subunit (synthetase) binds the substrates ammonia (free or transferred from glutamine from the small subunit), hydrogencarbonate and ATP and carries out an ATP-coupled ligase reaction, activating hydrogencarbonate by forming carboxy phosphate which reacts with ammonia to form carbamoyl phosphate. The chain is Carbamoyl phosphate synthase large chain from Clostridium botulinum (strain Alaska E43 / Type E3).